The following is a 704-amino-acid chain: Boron transporter 1 (704 aa).

Residues 1-35 (MEETFVPFEGIKNDLKGRLMCYKQDWTGGFKAGFR) lie on the Cytoplasmic side of the membrane. Residues 36-56 (ILAPTTYIFFASAIPVISFGE) form a helical membrane-spanning segment. The Extracellular portion of the chain corresponds to 57–75 (QLERSTDGVLTAVQTLAST). Residues 76–96 (AICGMIHSIIGGQPLLILGVA) traverse the membrane as a helical segment. Topologically, residues 97–120 (EPTVIMYTFMFNFAKARPELGRDL) are cytoplasmic. The chain crosses the membrane as a helical span at residues 121–141 (FLAWSGWVCVWTALMLFVLAI). Residues 142-155 (CGACSIINRFTRVA) lie on the Extracellular side of the membrane. The helical transmembrane segment at 156–176 (GELFGLLIAMLFMQQAIKGLV) threads the bilayer. Residues 177-195 (DEFRIPERENQKLKEFLPS) lie on the Cytoplasmic side of the membrane. A helical membrane pass occupies residues 196-216 (WRFANGMFALVLSFGLLLTGL). Over 217–233 (RSRKARSWRYGTGWLRS) the chain is Extracellular. The helical transmembrane segment at 234–254 (LIADYGVPLMVLVWTGVSYIP) threads the bilayer. Residues 255 to 289 (AGDVPKGIPRRLFSPNPWSPGAYGNWTVVKEMLDV) are Cytoplasmic-facing. Residues 290-310 (PIVYIIGAFIPASMIAVLYYF) form a helical membrane-spanning segment. Topologically, residues 311–337 (DHSVASQLAQQKEFNLRKPSSYHYDLL) are extracellular. Residues 338–358 (LLGFLTLMCGLLGVPPSNGVI) form a helical membrane-spanning segment. At 359 to 480 (PQSPMHTKSL…STMVGGCVAA (122 aa)) the chain is on the cytoplasmic side. The chain crosses the membrane as a helical span at residues 481–501 (MPILKMIPTSVLWGYFAFMAI). The Extracellular portion of the chain corresponds to 502 to 557 (ESLPGNQFWERILLLFTAPSRRFKVLEDYHATFVETVPFKTIAMFTLFQTTYLLIC). Residues 558 to 578 (FGLTWIPIAGVMFPLMIMFLI) traverse the membrane as a helical segment. Residues 579–704 (PVRQYLLPRF…RSPLNQSSSN (126 aa)) are Cytoplasmic-facing. Residues 641-704 (EFRHTSSPKV…RSPLNQSSSN (64 aa)) form a disordered region. The span at 647-664 (SPKVTSSSSTPVNNRSLS) shows a compositional bias: low complexity.

The protein belongs to the anion exchanger (TC 2.A.31.3) family. Expressed in proximal side of various root cells, notably in the columella, lateral root cap, epidermis and endodermis in tip and elongation zones of the root. Also detected in the epidermis, cortex, endodermis, and stele cells of the root hair zone. Observed in cotyledons and hypocotyls.

The protein resides in the cell membrane. The protein localises to the endosome membrane. It localises to the vacuole membrane. Its function is as follows. Efflux-type boron (B) transporter for xylem loading, responsive of boron translocation from roots to shoots under boron limitation. Boron is essential for maintaining the integrity of plants cell walls. The polypeptide is Boron transporter 1 (Arabidopsis thaliana (Mouse-ear cress)).